Reading from the N-terminus, the 342-residue chain is Isopentenyl-diphosphate delta-isomerase (342 aa).

12–13 (RK) serves as a coordination point for substrate. FMN contacts are provided by residues 71–73 (AMT), S101, and N129. 101–103 (SQR) is a substrate binding site. Q163 serves as a coordination point for substrate. E164 is a Mg(2+) binding site. FMN-binding positions include K195, T225, 272–274 (GIR), and 293–294 (AR).

The protein belongs to the IPP isomerase type 2 family. Homooctamer. Dimer of tetramers. FMN is required as a cofactor. Requires NADPH as cofactor. The cofactor is Mg(2+).

The protein resides in the cytoplasm. The catalysed reaction is isopentenyl diphosphate = dimethylallyl diphosphate. Involved in the biosynthesis of isoprenoids. Catalyzes the 1,3-allylic rearrangement of the homoallylic substrate isopentenyl (IPP) to its allylic isomer, dimethylallyl diphosphate (DMAPP). This chain is Isopentenyl-diphosphate delta-isomerase, found in Mycolicibacterium gilvum (strain PYR-GCK) (Mycobacterium gilvum (strain PYR-GCK)).